Consider the following 406-residue polypeptide: Zinc finger protein 793 (406 aa).

Positions 8-79 (VSFKDVVVGF…EAACPGCHCW (72 aa)) constitute a KRAB domain. 6 consecutive C2H2-type zinc fingers follow at residues 227–249 (HVCS…QRSH), 255–277 (YGCT…QRIH), 283–305 (FECF…QRTH), 311–333 (FVCS…RKMH), 339–361 (YRCR…WRTH), and 367–389 (YGCN…QKIH).

The protein belongs to the krueppel C2H2-type zinc-finger protein family.

It localises to the nucleus. May be involved in transcriptional regulation. In Homo sapiens (Human), this protein is Zinc finger protein 793 (ZNF793).